A 308-amino-acid chain; its full sequence is Glutaminase (308 aa).

Positions 66, 117, 161, 168, 192, 244, and 262 each coordinate substrate.

This sequence belongs to the glutaminase family. In terms of assembly, homotetramer.

The enzyme catalyses L-glutamine + H2O = L-glutamate + NH4(+). The protein is Glutaminase of Cronobacter sakazakii (strain ATCC BAA-894) (Enterobacter sakazakii).